A 364-amino-acid chain; its full sequence is Coproporphyrin III ferrochelatase (364 aa).

Fe-coproporphyrin III contacts are provided by Arg29 and Tyr118. 2 residues coordinate Fe(2+): His169 and Glu250.

Belongs to the ferrochelatase family.

The protein resides in the cytoplasm. It carries out the reaction Fe-coproporphyrin III + 2 H(+) = coproporphyrin III + Fe(2+). The protein operates within porphyrin-containing compound metabolism; protoheme biosynthesis. In terms of biological role, involved in coproporphyrin-dependent heme b biosynthesis. Catalyzes the insertion of ferrous iron into coproporphyrin III to form Fe-coproporphyrin III. This Streptococcus pneumoniae (strain Hungary19A-6) protein is Coproporphyrin III ferrochelatase.